Consider the following 250-residue polypeptide: Tumor necrosis factor ligand superfamily member 13 (250 aa).

Residues 1–104 constitute a propeptide that is removed on maturation; sequence MPASSPFLLA…ENGERSRKRR (104 aa). Disordered regions lie at residues 61 to 82 and 89 to 108; these read EVSRLQGTGGPSQNGEGYPWQS and DALEAWENGERSRKRRAVLT. The THD domain maps to 116–250; sequence SVLHLVPINA…HGTFLGFVKL (135 aa). N-linked (GlcNAc...) asparagine glycosylation occurs at Asn124. Cysteines 196 and 211 form a disulfide.

This sequence belongs to the tumor necrosis factor family. In terms of assembly, homotrimer. In terms of processing, the precursor is cleaved by furin. Expressed at high levels in transformed cell lines, cancers of colon, thyroid, lymphoid tissues and specifically expressed in monocytes and macrophages.

Its subcellular location is the secreted. In terms of biological role, cytokine that binds to TNFRSF13B/TACI and to TNFRSF17/BCMA. Plays a role in the regulation of tumor cell growth. May be involved in monocyte/macrophage-mediated immunological processes. The chain is Tumor necrosis factor ligand superfamily member 13 (TNFSF13) from Homo sapiens (Human).